Reading from the N-terminus, the 618-residue chain is Grainyhead-like protein 1 homolog (618 aa).

The segment at 1–91 (MTQEYDNKRP…EGEHPEPEHS (91 aa)) is transcription activation. The span at 76-92 (SSAVKPEGEHPEPEHSK) shows a compositional bias: basic and acidic residues. The segment at 76-100 (SSAVKPEGEHPEPEHSKRNSIPNVT) is disordered. T208 bears the Phosphothreonine mark. Positions 248–474 (SGNNFEYTLE…DLDTQPVLFI (227 aa)) constitute a Grh/CP2 DB domain. Interaction with DNA stretches follow at residues 380 to 389 (TDFSSQKGVK) and 427 to 430 (RKIR).

It belongs to the grh/CP2 family. Grainyhead subfamily. Binds DNA as homodimer. Homodimer, also forms heterodimers with GRHL2 or GRHL3. Post-translationally, methylation at Arg-9 and Lys-116 may be involved in regulating transcriptional activation. Isoform 1 is highly expressed in brain, pancreas, tonsil, placenta and kidney. Isoform 2 is highly expressed in brain and liver. Expression in the skin is confined to the suprabasal layers of the epidermis and to the hair follicles.

It is found in the nucleus. Functionally, transcription factor involved in epithelial development. Binds directly to the consensus DNA sequence 5'-AACCGGTT-3'. Important regulator of DSG1 in the context of hair anchorage and epidermal differentiation, participates in the maintenance of the skin barrier. There is no genetic interaction with GRHL3, nor functional cooperativity due to diverse target gene selectivity during epithelia development. May play a role in regulating glucose homeostasis and insulin signaling. The sequence is that of Grainyhead-like protein 1 homolog from Mus musculus (Mouse).